Reading from the N-terminus, the 296-residue chain is Cytidine deaminase (296 aa).

CMP/dCMP-type deaminase domains follow at residues 47–167 (TEAE…FGPK) and 186–296 (DSSD…VDPV). 88–90 (NLE) serves as a coordination point for substrate. H101 provides a ligand contact to Zn(2+). E103 acts as the Proton donor in catalysis. Residues C128 and C131 each contribute to the Zn(2+) site.

Belongs to the cytidine and deoxycytidylate deaminase family. In terms of assembly, homodimer. Requires Zn(2+) as cofactor.

It catalyses the reaction cytidine + H2O + H(+) = uridine + NH4(+). The enzyme catalyses 2'-deoxycytidine + H2O + H(+) = 2'-deoxyuridine + NH4(+). In terms of biological role, this enzyme scavenges exogenous and endogenous cytidine and 2'-deoxycytidine for UMP synthesis. The protein is Cytidine deaminase of Shewanella sp. (strain MR-4).